The chain runs to 377 residues: Actin-related protein 2/3 complex subunit 1 (377 aa).

5 WD repeats span residues 9–48 (ILPK…WKHA), 53–92 (DHDK…TWKQ), 98–139 (RLNR…WVSK), 144–183 (PLRS…VDAK), and 203–242 (PSGG…QPPR). Residues 293-313 (GTSKTSFTHTGNTGEGREEEG) form a disordered region. One copy of the WD 6 repeat lies at 342-376 (VHQNMIATLRPYAGTPGNITAFTSSGTDGRVVLWT).

Belongs to the WD repeat ARPC1 family. Component of the Arp2/3 complex composed of arp2, act2, arc1/p41-ARC, arc2/p34-ARC, arc3/p21-ARC, arc4/p20-ARC and arc5/p16-ARC.

It is found in the cytoplasm. Its subcellular location is the cytoskeleton. The protein resides in the actin patch. Functions as a component of the Arp2/3 complex which is involved in regulation of actin polymerization and together with an activating nucleation-promoting factor (NPF) mediates the formation of branched actin networks. The polypeptide is Actin-related protein 2/3 complex subunit 1 (arc1) (Schizosaccharomyces pombe (strain 972 / ATCC 24843) (Fission yeast)).